A 92-amino-acid chain; its full sequence is Acylphosphatase (92 aa).

The Acylphosphatase-like domain maps to 3-92; sequence TKHVLVSGIV…GPRSTHFEVT (90 aa). Catalysis depends on residues R18 and N36.

Belongs to the acylphosphatase family.

It catalyses the reaction an acyl phosphate + H2O = a carboxylate + phosphate + H(+). In Alcanivorax borkumensis (strain ATCC 700651 / DSM 11573 / NCIMB 13689 / SK2), this protein is Acylphosphatase (acyP).